Here is a 192-residue protein sequence, read N- to C-terminus: Type-4 uracil-DNA glycosylase (192 aa).

[4Fe-4S] cluster-binding residues include Cys-18 and Cys-21. Residues 45 to 47 (GEG), Phe-59, and Asn-85 each bind uracil. [4Fe-4S] cluster is bound by residues Cys-89 and Cys-105. His-161 contacts uracil.

This sequence belongs to the uracil-DNA glycosylase (UDG) superfamily. Type 4 (UDGa) family.

It carries out the reaction Hydrolyzes single-stranded DNA or mismatched double-stranded DNA and polynucleotides, releasing free uracil.. In terms of biological role, removes uracil bases that are present in DNA as a result of either deamination of cytosine or misincorporation of dUMP instead of dTMP. Can remove uracil from double-stranded DNA containing either a U/G or U/A base pair as well as from single-stranded DNA. The polypeptide is Type-4 uracil-DNA glycosylase (Thermotoga maritima (strain ATCC 43589 / DSM 3109 / JCM 10099 / NBRC 100826 / MSB8)).